The chain runs to 1207 residues: DNA-directed RNA polymerase subunit beta' (1207 aa).

Positions 60, 62, 75, and 78 each coordinate Zn(2+). Residues Asp-449, Asp-451, and Asp-453 each contribute to the Mg(2+) site. Residues Cys-822, Cys-896, Cys-903, and Cys-906 each coordinate Zn(2+).

Belongs to the RNA polymerase beta' chain family. In terms of assembly, the RNAP catalytic core consists of 2 alpha, 1 beta, 1 beta' and 1 omega subunit. When a sigma factor is associated with the core the holoenzyme is formed, which can initiate transcription. It depends on Mg(2+) as a cofactor. The cofactor is Zn(2+).

The catalysed reaction is RNA(n) + a ribonucleoside 5'-triphosphate = RNA(n+1) + diphosphate. Functionally, DNA-dependent RNA polymerase catalyzes the transcription of DNA into RNA using the four ribonucleoside triphosphates as substrates. The sequence is that of DNA-directed RNA polymerase subunit beta' from Staphylococcus saprophyticus subsp. saprophyticus (strain ATCC 15305 / DSM 20229 / NCIMB 8711 / NCTC 7292 / S-41).